The sequence spans 535 residues: MEVSSVKKLEQLEYSLESVTDLSSSSVSSSSPAVATFSYVDGVTELRFLQSDSTHCFNFDLASAQLFKLGPVHFICVSDGSSSSEEKSFSKGVNIKFKNEKDSKDFCESFEEWRNDSVVQGSSLQNGTVSANKSKFDNKIEASSAKMYFHYYGQLLHQQNMLQDYVRTGTYYAAVMENHSDFAGRVVVDVGAGSGILSMFAAQAGAKHVYAVEASEMAEYARKLIAGNPLFADRITVIKGKVEDIELPEKADILISEPMGTLLVNERMLESYVIARDRFMTPKGKMFPTVGRIHMAPFSDEFLFIEMANKAMFWQQQNYYGVDLTPLYGSAHQGYFSQPVVDAFDPRLLVASPMFHMIDFTQMKEEDFYEIDIPLKFTASMCTRMHGLACWFDVLFDGSTVQRWLTTAPGAPTTHWYQIRCVLSQPIYVMAGQEITGRLHLIAHSAQSYTIDLTLSAKMWGPGASQGGILQSSTCKFDLKEPYYRMSQPQAYPVAQEPPLQPQPELSTQQDIQTPNDELEEELLQQLPQNPSAQL.

Methionine 1 is modified (N-acetylmethionine). The 316-residue stretch at 141 to 456 folds into the SAM-dependent MTase PRMT-type domain; the sequence is EASSAKMYFH…QSYTIDLTLS (316 aa). Residues glutamine 158, arginine 167, glycine 191, glutamate 213, and glutamate 243 each coordinate S-adenosyl-L-methionine. Active-site residues include glutamate 257 and glutamate 266. Position 271 (serine 271) interacts with S-adenosyl-L-methionine. The tract at residues 494-517 is disordered; it reads VAQEPPLQPQPELSTQQDIQTPND. Residues 507 to 516 are compositionally biased toward polar residues; that stretch reads STQQDIQTPN.

It belongs to the class I-like SAM-binding methyltransferase superfamily. Protein arginine N-methyltransferase family. Interacts with PQT3 in the nucleus. In terms of processing, ubiquitinated by PQT3.

The protein localises to the nucleus. The protein resides in the cytoplasm. It catalyses the reaction L-arginyl-[protein] + 2 S-adenosyl-L-methionine = N(omega),N(omega)-dimethyl-L-arginyl-[protein] + 2 S-adenosyl-L-homocysteine + 2 H(+). Methylates (mono- and asymmetric dimethylation) the guanidino nitrogens of arginyl residues in several proteins involved in DNA packaging, transcription regulation, and mRNA stability. Recruited to promoters upon gene activation, methylates histone H3 and activates transcription via chromatin remodeling. Positive regulator in the oxidative stress tolerance that promotes the expression of enzymes preventing oxidative stress such as APX1 and GPX1 by histone methylation (H3R17me2a). Confers tolerance to cadmium CdCl(2) and salt NaCl stresses. The polypeptide is Probable histone-arginine methyltransferase 1.3 (PRMT13) (Arabidopsis thaliana (Mouse-ear cress)).